We begin with the raw amino-acid sequence, 379 residues long: Probable malonyl-CoA-acyl carrier protein transacylase, mitochondrial (379 aa).

The transit peptide at 1 to 23 directs the protein to the mitochondrion; it reads MLAARRLLRSPRITGALSWSRWS. Catalysis depends on residues serine 158 and histidine 275.

This sequence belongs to the type II malonyltransferase family.

It is found in the mitochondrion. The catalysed reaction is holo-[ACP] + malonyl-CoA = malonyl-[ACP] + CoA. Its pathway is lipid metabolism; fatty acid biosynthesis. Its function is as follows. Catalyzes the transfer of a malonyl moiety from malonyl-CoA to the free thiol group of the phosphopantetheine arm of the ACP protein. This suggests the existence of the biosynthesis of fatty acids in mitochondria. The polypeptide is Probable malonyl-CoA-acyl carrier protein transacylase, mitochondrial (Drosophila melanogaster (Fruit fly)).